Reading from the N-terminus, the 224-residue chain is Ribonuclease T (224 aa).

One can recognise an Exonuclease domain in the interval 32–206 (VVVDVETGGF…YDTEKTAELF (175 aa)). Mg(2+)-binding residues include Asp35, Glu37, His193, and Asp198. His193 (proton donor/acceptor) is an active-site residue.

The protein belongs to the RNase T family. In terms of assembly, homodimer. The cofactor is Mg(2+).

Its function is as follows. Trims short 3' overhangs of a variety of RNA species, leaving a one or two nucleotide 3' overhang. Responsible for the end-turnover of tRNA: specifically removes the terminal AMP residue from uncharged tRNA (tRNA-C-C-A). Also appears to be involved in tRNA biosynthesis. This Pseudomonas fluorescens (strain Pf0-1) protein is Ribonuclease T.